A 126-amino-acid polypeptide reads, in one-letter code: Probable 4-amino-4-deoxy-L-arabinose-phosphoundecaprenol flippase subunit ArnF (126 aa).

Topologically, residues 1–4 are cytoplasmic; that stretch reads MKGY. The helical transmembrane segment at 5 to 25 threads the bilayer; that stretch reads IWGLISVLLVTIAQLLLKWGV. Over 26-49 the chain is Periplasmic; it reads VNLPALNLGLHWFDIEWLWSHRHS. A helical transmembrane segment spans residues 50–70; the sequence is LVAVMAGLAGYLLSMLCWLFT. Topologically, residues 71 to 79 are cytoplasmic; sequence LKYLPLNKA. Residues 80-100 traverse the membrane as a helical segment; it reads YPLISLSYVFVYLMVALLPWF. Topologically, residues 101 to 102 are periplasmic; sequence NE. Residues 103–123 traverse the membrane as a helical segment; sequence TITLLKTAGVIFILYGVWLIS. Over 124-126 the chain is Cytoplasmic; it reads RPE.

This sequence belongs to the ArnF family. Heterodimer of ArnE and ArnF.

Its subcellular location is the cell inner membrane. Its pathway is bacterial outer membrane biogenesis; lipopolysaccharide biosynthesis. In terms of biological role, translocates 4-amino-4-deoxy-L-arabinose-phosphoundecaprenol (alpha-L-Ara4N-phosphoundecaprenol) from the cytoplasmic to the periplasmic side of the inner membrane. In Photorhabdus laumondii subsp. laumondii (strain DSM 15139 / CIP 105565 / TT01) (Photorhabdus luminescens subsp. laumondii), this protein is Probable 4-amino-4-deoxy-L-arabinose-phosphoundecaprenol flippase subunit ArnF.